The chain runs to 428 residues: Histidine--tRNA ligase (428 aa).

It belongs to the class-II aminoacyl-tRNA synthetase family.

The protein localises to the cytoplasm. It carries out the reaction tRNA(His) + L-histidine + ATP = L-histidyl-tRNA(His) + AMP + diphosphate + H(+). The protein is Histidine--tRNA ligase of Korarchaeum cryptofilum (strain OPF8).